We begin with the raw amino-acid sequence, 298 residues long: Protoheme IX farnesyltransferase (298 aa).

Helical transmembrane passes span 26–46 (VVGHIVFTAIIGMFLAVPGVP), 52–72 (FWASLGIGFAAASAAALNHFL), 98–118 (VVGFALVLGIVAMAILIAFVN), 120–140 (LTAFLTFLSLIGYAVIYTVYL), 148–168 (IVIGGAAGAAPPVLGWCAVTG), 174–194 (ALLLFLLIFVWTPPHFWAYAI), 214–234 (IAFTQLHILLYTILLFLAGLM), 241–261 (SGEIYLAAALIFGGIFVYYAI), and 278–298 (YSLVYLVGIFSALLVDHYIVL).

The protein belongs to the UbiA prenyltransferase family. Protoheme IX farnesyltransferase subfamily.

It is found in the cell inner membrane. It catalyses the reaction heme b + (2E,6E)-farnesyl diphosphate + H2O = Fe(II)-heme o + diphosphate. It functions in the pathway porphyrin-containing compound metabolism; heme O biosynthesis; heme O from protoheme: step 1/1. Its function is as follows. Converts heme B (protoheme IX) to heme O by substitution of the vinyl group on carbon 2 of heme B porphyrin ring with a hydroxyethyl farnesyl side group. The sequence is that of Protoheme IX farnesyltransferase from Methylococcus capsulatus (strain ATCC 33009 / NCIMB 11132 / Bath).